We begin with the raw amino-acid sequence, 435 residues long: Nucleoredoxin (435 aa).

Serine 2 is subject to N-acetylserine. Residues 167-321 (PKPFREVIAG…VLELSDSNAA (155 aa)) enclose the Thioredoxin domain.

It belongs to the nucleoredoxin family. As to quaternary structure, associates with the phosphatase 2A holoenzyme. Interacts with PPP2CA; the interaction is direct. Interacts with DVL1 (via PDZ domain); the interaction is direct and regulated by oxidative stress.

It is found in the cytoplasm. Its subcellular location is the cytosol. It localises to the nucleus. The enzyme catalyses [protein]-dithiol + NAD(+) = [protein]-disulfide + NADH + H(+). The catalysed reaction is [protein]-dithiol + NADP(+) = [protein]-disulfide + NADPH + H(+). Functions as a redox-dependent negative regulator of the Wnt signaling pathway, possibly by preventing ubiquitination of DVL3 by the BCR(KLHL12) complex. May also function as a transcriptional regulator act as a regulator of protein phosphatase 2A (PP2A). The sequence is that of Nucleoredoxin (NXN) from Homo sapiens (Human).